Consider the following 460-residue polypeptide: Alpha-1,3/1,6-mannosyltransferase ALG2 (460 aa).

N-linked (GlcNAc...) asparagine glycosylation is found at Asn-41 and Asn-389. A helical membrane pass occupies residues Leu-439–Trp-459.

This sequence belongs to the glycosyltransferase group 1 family.

The protein localises to the endoplasmic reticulum membrane. It catalyses the reaction a beta-D-Man-(1-&gt;4)-beta-D-GlcNAc-(1-&gt;4)-alpha-D-GlcNAc-diphospho-di-trans,poly-cis-dolichol + GDP-alpha-D-mannose = an alpha-D-Man-(1-&gt;3)-beta-D-Man-(1-&gt;4)-beta-D-GlcNAc-(1-&gt;4)-alpha-D-GlcNAc-diphospho-di-trans,poly-cis-dolichol + GDP + H(+). It carries out the reaction an alpha-D-Man-(1-&gt;3)-beta-D-Man-(1-&gt;4)-beta-D-GlcNAc-(1-&gt;4)-alpha-D-GlcNAc-diphospho-di-trans,poly-cis-dolichol + GDP-alpha-D-mannose = an alpha-D-Man-(1-&gt;3)-[alpha-D-Man-(1-&gt;6)]-beta-D-Man-(1-&gt;4)-beta-D-GlcNAc-(1-&gt;4)-alpha-D-GlcNAc-diphospho-di-trans,poly-cis-dolichol + GDP + H(+). The protein operates within protein modification; protein glycosylation. Its function is as follows. Mannosylates Man(2)GlcNAc(2)-dolichol diphosphate and Man(1)GlcNAc(2)-dolichol diphosphate to form Man(3)GlcNAc(2)-dolichol diphosphate. The protein is Alpha-1,3/1,6-mannosyltransferase ALG2 (ALG2) of Yarrowia lipolytica (strain CLIB 122 / E 150) (Yeast).